The following is a 632-amino-acid chain: Probable potassium transport system protein Kup 1 (632 aa).

12 helical membrane-spanning segments follow: residues 17–37, 60–80, 106–126, 144–164, 175–195, 210–230, 254–274, 292–312, 344–364, 370–390, 401–421, and 426–446; these read LFYLALGSVGVVYGDIGTSPL, LISLMIWALTIIVTIKYVLFL, TALLMLLGLMGAALFLGDAMI, PSLAEYIVPISVVILALLFVV, FFGPITAVWFLVMAAAGISHI, AVSFLLHEGFYGVVVLGAVFL, WFLLVFPALTLNYLGQGALVL, ALLPVVILATAATIIASQAVI, IFLPSVNAVLFFGVIFLVLSF, LATAYGISVTGAMVVTSIMAF, LPVAVIALAPLVVLEMIFLGA, and IHDGGYIPILIATAFTVVMWT.

Belongs to the HAK/KUP transporter (TC 2.A.72) family.

It localises to the cell inner membrane. The enzyme catalyses K(+)(in) + H(+)(in) = K(+)(out) + H(+)(out). Transport of potassium into the cell. Likely operates as a K(+):H(+) symporter. This is Probable potassium transport system protein Kup 1 from Rhizobium etli (strain ATCC 51251 / DSM 11541 / JCM 21823 / NBRC 15573 / CFN 42).